The following is a 383-amino-acid chain: Pantothenate kinase 1 (383 aa).

The protein belongs to the type II pantothenate kinase family. As to expression, highly expressed in leaves and developing seeds. Expressed in roots, stems and flowers.

The enzyme catalyses (R)-pantothenate + ATP = (R)-4'-phosphopantothenate + ADP + H(+). Its pathway is cofactor biosynthesis; coenzyme A biosynthesis; CoA from (R)-pantothenate: step 1/5. With respect to regulation, regulated by feedback inhibition by malonyl-CoA. Its function is as follows. Catalyzes the phosphorylation of pantothenate the first step in CoA biosynthesis. May play a role in the physiological regulation of the intracellular CoA concentration. Functionally redudant with PANK2. This chain is Pantothenate kinase 1 (PANK1), found in Arabidopsis thaliana (Mouse-ear cress).